Reading from the N-terminus, the 72-residue chain is Translation initiation factor IF-1 (72 aa).

Residues 1 to 72 (MAKQDVIELE…SRGRITYRYK (72 aa)) enclose the S1-like domain.

This sequence belongs to the IF-1 family. In terms of assembly, component of the 30S ribosomal translation pre-initiation complex which assembles on the 30S ribosome in the order IF-2 and IF-3, IF-1 and N-formylmethionyl-tRNA(fMet); mRNA recruitment can occur at any time during PIC assembly.

Its subcellular location is the cytoplasm. In terms of biological role, one of the essential components for the initiation of protein synthesis. Stabilizes the binding of IF-2 and IF-3 on the 30S subunit to which N-formylmethionyl-tRNA(fMet) subsequently binds. Helps modulate mRNA selection, yielding the 30S pre-initiation complex (PIC). Upon addition of the 50S ribosomal subunit IF-1, IF-2 and IF-3 are released leaving the mature 70S translation initiation complex. The protein is Translation initiation factor IF-1 of Staphylococcus epidermidis (strain ATCC 35984 / DSM 28319 / BCRC 17069 / CCUG 31568 / BM 3577 / RP62A).